A 285-amino-acid polypeptide reads, in one-letter code: Protoheme IX farnesyltransferase (285 aa).

A run of 7 helical transmembrane segments spans residues 16–36, 40–60, 106–126, 136–156, 165–185, 217–237, and 265–285; these read AKPKVVSLLDVVAIASYILAF, WYNLIPVLIGGSIAAGGSMII, LLANPLTAFFILLGSLVYVFV, WLNIVIGGFAGSAAAWAGYAA, SLLLGLLVFAWTPGHFWALAL, ILMIPFALGLMLYLNLIYVII, and YKFSAPYLAIVMIAAVISFIL.

The protein belongs to the UbiA prenyltransferase family. Protoheme IX farnesyltransferase subfamily.

It localises to the cell membrane. The enzyme catalyses heme b + (2E,6E)-farnesyl diphosphate + H2O = Fe(II)-heme o + diphosphate. The protein operates within porphyrin-containing compound metabolism; heme O biosynthesis; heme O from protoheme: step 1/1. Functionally, converts heme B (protoheme IX) to heme O by substitution of the vinyl group on carbon 2 of heme B porphyrin ring with a hydroxyethyl farnesyl side group. The sequence is that of Protoheme IX farnesyltransferase from Sulfolobus acidocaldarius (strain ATCC 33909 / DSM 639 / JCM 8929 / NBRC 15157 / NCIMB 11770).